Consider the following 529-residue polypeptide: Peptide chain release factor 3 (529 aa).

Positions 11–280 (AKRRTFAIIS…GLIEWAPQPM (270 aa)) constitute a tr-type G domain. Residues 20–27 (SHPDAGKT), 88–92 (DTPGH), and 142–145 (NKLD) each bind GTP.

The protein belongs to the TRAFAC class translation factor GTPase superfamily. Classic translation factor GTPase family. PrfC subfamily.

The protein resides in the cytoplasm. Increases the formation of ribosomal termination complexes and stimulates activities of RF-1 and RF-2. It binds guanine nucleotides and has strong preference for UGA stop codons. It may interact directly with the ribosome. The stimulation of RF-1 and RF-2 is significantly reduced by GTP and GDP, but not by GMP. This Enterobacter sp. (strain 638) protein is Peptide chain release factor 3.